The chain runs to 116 residues: Ribonuclease P protein component (116 aa).

This sequence belongs to the RnpA family. Consists of a catalytic RNA component (M1 or rnpB) and a protein subunit.

It carries out the reaction Endonucleolytic cleavage of RNA, removing 5'-extranucleotides from tRNA precursor.. Its function is as follows. RNaseP catalyzes the removal of the 5'-leader sequence from pre-tRNA to produce the mature 5'-terminus. It can also cleave other RNA substrates such as 4.5S RNA. The protein component plays an auxiliary but essential role in vivo by binding to the 5'-leader sequence and broadening the substrate specificity of the ribozyme. The sequence is that of Ribonuclease P protein component from Exiguobacterium sibiricum (strain DSM 17290 / CCUG 55495 / CIP 109462 / JCM 13490 / 255-15).